A 368-amino-acid polypeptide reads, in one-letter code: 4-hydroxy-3-methylbut-2-en-1-yl diphosphate synthase (flavodoxin) (368 aa).

[4Fe-4S] cluster contacts are provided by cysteine 271, cysteine 274, cysteine 306, and glutamate 313.

It belongs to the IspG family. [4Fe-4S] cluster is required as a cofactor.

It catalyses the reaction (2E)-4-hydroxy-3-methylbut-2-enyl diphosphate + oxidized [flavodoxin] + H2O + 2 H(+) = 2-C-methyl-D-erythritol 2,4-cyclic diphosphate + reduced [flavodoxin]. Its pathway is isoprenoid biosynthesis; isopentenyl diphosphate biosynthesis via DXP pathway; isopentenyl diphosphate from 1-deoxy-D-xylulose 5-phosphate: step 5/6. Functionally, converts 2C-methyl-D-erythritol 2,4-cyclodiphosphate (ME-2,4cPP) into 1-hydroxy-2-methyl-2-(E)-butenyl 4-diphosphate. The chain is 4-hydroxy-3-methylbut-2-en-1-yl diphosphate synthase (flavodoxin) from Histophilus somni (strain 129Pt) (Haemophilus somnus).